We begin with the raw amino-acid sequence, 166 residues long: UPF0303 protein Avin_29320 (166 aa).

This sequence belongs to the UPF0303 family.

The protein is UPF0303 protein Avin_29320 of Azotobacter vinelandii (strain DJ / ATCC BAA-1303).